A 183-amino-acid chain; its full sequence is Large ribosomal subunit protein uL6 (183 aa).

It belongs to the universal ribosomal protein uL6 family. In terms of assembly, part of the 50S ribosomal subunit.

Its function is as follows. This protein binds to the 23S rRNA, and is important in its secondary structure. It is located near the subunit interface in the base of the L7/L12 stalk, and near the tRNA binding site of the peptidyltransferase center. The sequence is that of Large ribosomal subunit protein uL6 from Methanococcus aeolicus (strain ATCC BAA-1280 / DSM 17508 / OCM 812 / Nankai-3).